Here is a 113-residue protein sequence, read N- to C-terminus: Large ribosomal subunit protein bL19 (113 aa).

It belongs to the bacterial ribosomal protein bL19 family.

Functionally, this protein is located at the 30S-50S ribosomal subunit interface and may play a role in the structure and function of the aminoacyl-tRNA binding site. The protein is Large ribosomal subunit protein bL19 of Mycolicibacterium smegmatis (strain ATCC 700084 / mc(2)155) (Mycobacterium smegmatis).